Reading from the N-terminus, the 280-residue chain is Large ribosomal subunit protein uL2 (280 aa).

Disordered stretches follow at residues 1 to 47 and 224 to 280; these read MAIR…NVHG and VVMN…SKKR. Positions 23-33 are enriched in basic and acidic residues; it reads EITRSTPEKSL. A compositionally biased stretch (basic residues) spans 37-47; that stretch reads LPKKGGRNVHG. Residues 258 to 268 show a composition bias toward polar residues; the sequence is RNPNRYSNNMI. Basic residues predominate over residues 270 to 280; that stretch reads QRRRTNKSKKR.

Belongs to the universal ribosomal protein uL2 family. Part of the 50S ribosomal subunit. Forms a bridge to the 30S subunit in the 70S ribosome.

Functionally, one of the primary rRNA binding proteins. Required for association of the 30S and 50S subunits to form the 70S ribosome, for tRNA binding and peptide bond formation. It has been suggested to have peptidyltransferase activity; this is somewhat controversial. Makes several contacts with the 16S rRNA in the 70S ribosome. The protein is Large ribosomal subunit protein uL2 of Corynebacterium diphtheriae (strain ATCC 700971 / NCTC 13129 / Biotype gravis).